We begin with the raw amino-acid sequence, 329 residues long: Ketol-acid reductoisomerase (NADP(+)) (329 aa).

Positions 2 to 181 (VQKYYESDAD…GATRAVVFET (180 aa)) constitute a KARI N-terminal Rossmann domain. NADP(+)-binding positions include 25 to 28 (YGSQ), arginine 48, serine 52, and 82 to 85 (DENQ). The active site involves histidine 107. Glycine 133 is a binding site for NADP(+). One can recognise a KARI C-terminal knotted domain in the interval 182 to 327 (TFAEETETDL…AEIRGFMPQF (146 aa)). 4 residues coordinate Mg(2+): aspartate 190, glutamate 194, glutamate 226, and glutamate 230. A substrate-binding site is contributed by serine 251.

This sequence belongs to the ketol-acid reductoisomerase family. It depends on Mg(2+) as a cofactor.

The catalysed reaction is (2R)-2,3-dihydroxy-3-methylbutanoate + NADP(+) = (2S)-2-acetolactate + NADPH + H(+). The enzyme catalyses (2R,3R)-2,3-dihydroxy-3-methylpentanoate + NADP(+) = (S)-2-ethyl-2-hydroxy-3-oxobutanoate + NADPH + H(+). Its pathway is amino-acid biosynthesis; L-isoleucine biosynthesis; L-isoleucine from 2-oxobutanoate: step 2/4. The protein operates within amino-acid biosynthesis; L-valine biosynthesis; L-valine from pyruvate: step 2/4. Functionally, involved in the biosynthesis of branched-chain amino acids (BCAA). Catalyzes an alkyl-migration followed by a ketol-acid reduction of (S)-2-acetolactate (S2AL) to yield (R)-2,3-dihydroxy-isovalerate. In the isomerase reaction, S2AL is rearranged via a Mg-dependent methyl migration to produce 3-hydroxy-3-methyl-2-ketobutyrate (HMKB). In the reductase reaction, this 2-ketoacid undergoes a metal-dependent reduction by NADPH to yield (R)-2,3-dihydroxy-isovalerate. This is Ketol-acid reductoisomerase (NADP(+)) from Methanoculleus marisnigri (strain ATCC 35101 / DSM 1498 / JR1).